We begin with the raw amino-acid sequence, 971 residues long: MKKKKIFKLISKTYLEEHDAEGYYFKHESGLEVFHLKSDSFKENAFCIAFKTIPSNNTGVAHVLEHTIFCGSSKYKIKDPFLYLLKGSLNTFLNAMTFPDKTIYPAASTIEKDYFNLFNIYADSIFNPLLKKESFMQEGYNINPKDFKVSGIVFNEMKGSYSNKNSLINEIVSSSLFEEGAYKYDSGGIPTNIIDLTYESFLDFYKKYYTLENCKIFLCGNTQTEKNLNFIEKYIIRPYKKEKSNVNINIENVKRWEKGKKLTYKIPKENDNSLGVYTINWLCTEINNIEDSIGLEILSEILLDDSCSFTINILKSGIGEDIAHISGINTDLKESIFSFGLQNVVENKEKEFKNLVFSELKNLVKNKIPKELIKGILFGYEFALKEEKGQNFPIALMIKSFKGWLNGLHPIKTLQTSYYINEITNKLEKGIYYFENLIEKYLIFNNHYTLISFIPSHDTEKEMEEEIEKKLMAREIEIKQNPEEFLQFKKDYNQFKKYQNKKDSKADIAKLPLLKIEDLPKQIEKSLDLNEIKELNLHSFKFKSNNIFNVNLFFKLDFLEKEDYIYLSLFKRALQDLSTKNYSYININNKIQNTLGQINISESYDEDIDGNILNSFNISFKSFNNKVKESFELIKEILININFHDYERLKEITLSLKNDFKSLLIPKGHLLAMLRSKSKLKLNEYLKELQNGITGREFWQKAKTDTESLKEIANKLDNLKNKIILKNNLSALIMGNTDDILKNLENEFFNLKESLEESNHYNGLLNLDANSKALREIIIIQSKVAFNAICFPSYKINDENYPKANFLEHVLRSGIFWEKIRVMGGAYGASASIANGIFSFASYRDPNFTKTYQAFEKSLEELANNKMTDDEIYTYLIGLIGTNIYVKTKATEALQSYRRKMLNISDSLRQDIRNAYFTITPQDIKEISTKILTQIRQHNSIASLVNNQIYEEEKNNLEKLIGKEYSLKKIY.

This is an uncharacterized protein from Borreliella burgdorferi (strain ATCC 35210 / DSM 4680 / CIP 102532 / B31) (Borrelia burgdorferi).